Here is a 234-residue protein sequence, read N- to C-terminus: Glutathione S-transferase sirG (234 aa).

The 85-residue stretch at 15 to 99 (LYVVKATPTS…YLTDAYDHEG (85 aa)) folds into the GST N-terminal domain. The GST C-terminal domain maps to 105 to 230 (DLWERTQVNN…KALSQKFRPS (126 aa)).

This sequence belongs to the GST superfamily.

The enzyme catalyses RX + glutathione = an S-substituted glutathione + a halide anion + H(+). Its pathway is mycotoxin biosynthesis. In terms of biological role, glutathione S-transferase; part of the gene cluster that mediates the biosynthesis of sirodesmin PL, an epipolythiodioxopiperazine (ETP) characterized by a disulfide bridged cyclic dipeptide and that acts as a phytotoxin which is involved in the blackleg didease of canola. SirD catalyzes the O-prenylation of L-tyrosine (L-Tyr) in the presence of dimethylallyl diphosphate (DMAPP) to yield 4-O-dimethylallyl-L-Tyr, and therefore represents probably the first pathway-specific enzyme in the biosynthesis of sirodesmin PL. 4-O-dimethylallyl-L-Tyr, then undergoes condensation with L-Ser in a reaction catalyzed by the non-ribosomal peptide synthase sirP to form the diketopiperazine (DKP) backbone. Further bishydroxylation of the DKP performed by the cytochrome P450 monooxygenase sirC leads to the production of the intermediate phomamide. This step is essential to form the reactive thiol group required for toxicity of sirodesmin PL. The next steps of sirodesmin biosynthesis are not well understood yet, but some predictions could be made from intermediate compounds identification. Phomamide is converted into phomalizarine via oxidation, probably by sirT. Further oxidation, methylation (by sirM or sirN) and reduction steps convert phomalizarine to deacetyl sirodesmin. Finally, acetyltransferase sirH probably acetylates deacetyl sirodesmin to produce sirodesmin PL. This chain is Glutathione S-transferase sirG, found in Leptosphaeria maculans (Blackleg fungus).